The primary structure comprises 424 residues: 3-oxo-tetronate kinase (424 aa).

Residues Ser260, Gly364–Thr367, and Gly407 contribute to the ATP site.

This sequence belongs to the four-carbon acid sugar kinase family.

The catalysed reaction is 3-dehydro-L-erythronate + ATP = 3-dehydro-4-O-phospho-L-erythronate + ADP + H(+). It catalyses the reaction 3-dehydro-D-erythronate + ATP = 3-dehydro-4-O-phospho-D-erythronate + ADP + H(+). Catalyzes the ATP-dependent phosphorylation of 3-oxo-tetronate to 3-oxo-tetronate 4-phosphate. This chain is 3-oxo-tetronate kinase, found in Pectobacterium atrosepticum (strain SCRI 1043 / ATCC BAA-672) (Erwinia carotovora subsp. atroseptica).